Here is a 160-residue protein sequence, read N- to C-terminus: Cytochrome b6-f complex subunit 4 (160 aa).

The next 3 membrane-spanning stretches (helical) occupy residues 36-56 (LLYI…GLSV), 95-115 (LLGV…PFIE), and 131-151 (TVFL…TFPI).

It belongs to the cytochrome b family. PetD subfamily. The 4 large subunits of the cytochrome b6-f complex are cytochrome b6, subunit IV (17 kDa polypeptide, petD), cytochrome f and the Rieske protein, while the 4 small subunits are petG, petL, petM and petN. The complex functions as a dimer.

The protein resides in the plastid. It localises to the chloroplast thylakoid membrane. Component of the cytochrome b6-f complex, which mediates electron transfer between photosystem II (PSII) and photosystem I (PSI), cyclic electron flow around PSI, and state transitions. This chain is Cytochrome b6-f complex subunit 4, found in Stigeoclonium helveticum (Green alga).